The primary structure comprises 164 residues: UPF0304 protein NT01EI_2691 (164 aa).

This sequence belongs to the UPF0304 family.

The protein is UPF0304 protein NT01EI_2691 of Edwardsiella ictaluri (strain 93-146).